The sequence spans 291 residues: Tyrosine recombinase XerA (291 aa).

One can recognise a Core-binding (CB) domain in the interval 9–102 (PESGDLYNAF…AVRRFLKWIN (94 aa)). In terms of domain architecture, Tyr recombinase spans 115-279 (KEVKALDEIQ…VLDDLRNEYL (165 aa)). Residues Arg-150, Lys-175, His-231, Arg-234, and His-257 contribute to the active site. The active-site O-(3'-phospho-DNA)-tyrosine intermediate is the Tyr-266.

It belongs to the 'phage' integrase family. XerA subfamily.

The protein localises to the cytoplasm. Functionally, site-specific tyrosine recombinase, which acts by catalyzing the cutting and rejoining of the recombining DNA molecules. Probably involved in the resolution of chromosome dimers. Binds to the dif site. The sequence is that of Tyrosine recombinase XerA from Saccharolobus solfataricus (strain ATCC 35092 / DSM 1617 / JCM 11322 / P2) (Sulfolobus solfataricus).